Here is a 265-residue protein sequence, read N- to C-terminus: uncharacterized protein (265 aa).

Residues 1–160 form a disordered region; that stretch reads MDKSKNLFDL…STEPVVAAPV (160 aa). The span at 28 to 42 shows a compositional bias: low complexity; sequence AAAAPVAAKKPVAPK. 2 stretches are compositionally biased toward basic and acidic residues: residues 73–85 and 102–119; these read SEER…DSKS and RQFD…ENKK.

This sequence belongs to the SERBP1-HABP4 family.

Ribosome-binding protein that acts as a regulator of mRNA translation by promoting ribosome inactivation. This is an uncharacterized protein from Dictyostelium discoideum (Social amoeba).